Reading from the N-terminus, the 459-residue chain is Zinc finger chaperone zpr1 (459 aa).

2 C4-type zinc fingers span residues 38–70 (CMEC…CPHC) and 259–291 (CPSC…CDRC).

It belongs to the ZPR1 family.

It localises to the cytoplasm. The protein resides in the nucleus. In terms of biological role, acts as a protein folding chaperone for elongation factor 1-alpha. This is Zinc finger chaperone zpr1 from Schizosaccharomyces pombe (strain 972 / ATCC 24843) (Fission yeast).